The chain runs to 119 residues: MPRVKGGYVARRRRKKVLKLAKGYFGSKHTLFKSAQGQVMKSLQYAYRDRRQKKRDFRKLWITRINAAARLNGLSYSRLMHGLKLAGINVNRKMLADLAINDEKAFAQLAEKAKASLNN.

This sequence belongs to the bacterial ribosomal protein bL20 family.

In terms of biological role, binds directly to 23S ribosomal RNA and is necessary for the in vitro assembly process of the 50S ribosomal subunit. It is not involved in the protein synthesizing functions of that subunit. The chain is Large ribosomal subunit protein bL20 from Halalkalibacterium halodurans (strain ATCC BAA-125 / DSM 18197 / FERM 7344 / JCM 9153 / C-125) (Bacillus halodurans).